The sequence spans 134 residues: Small ribosomal subunit protein uS9c (134 aa).

The protein belongs to the universal ribosomal protein uS9 family.

It localises to the plastid. The protein localises to the chloroplast. The chain is Small ribosomal subunit protein uS9c (rps9) from Thalassiosira pseudonana (Marine diatom).